The following is a 335-amino-acid chain: Protein-arginine kinase (335 aa).

The Phosphagen kinase C-terminal domain maps to 21-244 (IVMSSRIRLA…NQIIHDEKQI (224 aa)). ATP contacts are provided by residues 24–28 (SSRIR), His-82, Arg-115, 166–170 (RASVM), and 197–202 (RGIYGE).

The protein belongs to the ATP:guanido phosphotransferase family.

It carries out the reaction L-arginyl-[protein] + ATP = N(omega)-phospho-L-arginyl-[protein] + ADP + H(+). In terms of biological role, catalyzes the specific phosphorylation of arginine residues in proteins. This chain is Protein-arginine kinase, found in Staphylococcus aureus (strain Mu3 / ATCC 700698).